The chain runs to 464 residues: Glycine receptor subunit alpha-3 (464 aa).

Residues 1 to 33 (MAHVRHFRTLVSGFYFWEAALLLSLVATKETDS) form the signal peptide. The Extracellular segment spans residues 34-255 (ARSRSAPMSP…RFHLERQMGY (222 aa)). N-linked (GlcNAc...) asparagine glycosylation occurs at asparagine 71. Cysteine 171 and cysteine 185 are oxidised to a cystine. Zn(2+) is bound by residues glutamate 225 and aspartate 227. Residues cysteine 231 and cysteine 242 are joined by a disulfide bond. 235–240 (YNTGKF) contributes to the strychnine binding site. Histidine 248 is a Zn(2+) binding site. Residues 256-277 (YLIQMYIPSLLIVILSWVSFWI) form a helical membrane-spanning segment. The Cytoplasmic portion of the chain corresponds to 278–282 (NMDAA). The chain crosses the membrane as a helical span at residues 283-303 (PARVALGITTVLTMTTQSSGS). The Extracellular portion of the chain corresponds to 304-314 (RASLPKVSYVK). Residues 315-335 (AIDIWMAVCLLFVFSALLEYA) form a helical membrane-spanning segment. Residues 336-430 (AVNFVSRQHK…FIDRAKKIDT (95 aa)) lie on the Cytoplasmic side of the membrane. Phosphoserine is present on residues serine 370 and serine 379. The chain crosses the membrane as a helical span at residues 431–451 (ISRACFPLAFLIFNIFYWVIY). The Extracellular segment spans residues 452–464 (KILRHEDIHQQQD).

This sequence belongs to the ligand-gated ion channel (TC 1.A.9) family. Glycine receptor (TC 1.A.9.3) subfamily. GLRA3 sub-subfamily. In terms of assembly, homopentamer (in vitro). Heteropentamer composed of GLRA3 and GLRB. Both homopentamers and heteropentamers form functional ion channels, but their characteristics are subtly different. Phosphorylated by PKA; this causes down-regulation of channel activity. Widely distributed throughout the central nervous system.

Its subcellular location is the postsynaptic cell membrane. It is found in the perikaryon. The protein resides in the cell projection. It localises to the dendrite. The protein localises to the synapse. Its subcellular location is the cell membrane. The enzyme catalyses chloride(in) = chloride(out). Its function is as follows. Glycine receptors are ligand-gated chloride channels. Channel opening is triggered by extracellular glycine. Channel characteristics depend on the subunit composition; heteropentameric channels display faster channel closure. Plays an important role in the down-regulation of neuronal excitability. Contributes to the generation of inhibitory postsynaptic currents. Contributes to increased pain perception in response to increased prostaglandin E2 levels. Plays a role in cellular responses to ethanol. This is Glycine receptor subunit alpha-3 (GLRA3) from Homo sapiens (Human).